The sequence spans 294 residues: Beta-lactamase (294 aa).

Positions 1 to 27 (MFKKRGRQTVLIAAVLAFFTASSPLLA) are cleaved as a signal peptide. Ser-76 (acyl-ester intermediate) is an active-site residue. The active-site Proton acceptor is Glu-174. Substrate is bound at residue 240–242 (KTG).

This sequence belongs to the class-A beta-lactamase family.

It carries out the reaction a beta-lactam + H2O = a substituted beta-amino acid. The polypeptide is Beta-lactamase (Citrobacter koseri (Citrobacter diversus)).